A 520-amino-acid chain; its full sequence is Succinyl-CoA:3-ketoacid coenzyme A transferase 2B, mitochondrial (520 aa).

Residues 1 to 39 constitute a mitochondrion transit peptide; sequence MAALRLLAWALPRGVSALRPRPALPHRLIRRYVSDRSGS. Residues 280-299 form a disordered region; it reads ERLTTRDSKPAPGSKDNDPS. Glutamate 342 (5-glutamyl coenzyme A thioester intermediate) is an active-site residue.

This sequence belongs to the 3-oxoacid CoA-transferase family. Homodimer. Testis specific. Expressed in late spermatids. Accumulates during spermiogenesis. Also detected in the midpiece of spermatozoa.

The protein localises to the mitochondrion. It carries out the reaction a 3-oxo acid + succinyl-CoA = a 3-oxoacyl-CoA + succinate. It functions in the pathway ketone metabolism; succinyl-CoA degradation; acetoacetyl-CoA from succinyl-CoA: step 1/1. Its function is as follows. Key enzyme for ketone body catabolism. Transfers the CoA moiety from succinate to acetoacetate. Formation of the enzyme-CoA intermediate proceeds via an unstable anhydride species formed between the carboxylate groups of the enzyme and substrate. Probably play and important roles in the energy metabolism of spermatozoa. The protein is Succinyl-CoA:3-ketoacid coenzyme A transferase 2B, mitochondrial (Oxct2b) of Mus musculus (Mouse).